We begin with the raw amino-acid sequence, 94 residues long: Integration host factor subunit beta (94 aa).

It belongs to the bacterial histone-like protein family. Heterodimer of an alpha and a beta chain.

Functionally, this protein is one of the two subunits of integration host factor, a specific DNA-binding protein that functions in genetic recombination as well as in transcriptional and translational control. The polypeptide is Integration host factor subunit beta (Salmonella arizonae (strain ATCC BAA-731 / CDC346-86 / RSK2980)).